A 557-amino-acid polypeptide reads, in one-letter code: 2-succinyl-5-enolpyruvyl-6-hydroxy-3-cyclohexene-1-carboxylate synthase (557 aa).

The protein belongs to the TPP enzyme family. MenD subfamily. Homodimer. Mg(2+) serves as cofactor. Mn(2+) is required as a cofactor. The cofactor is thiamine diphosphate.

The catalysed reaction is isochorismate + 2-oxoglutarate + H(+) = 5-enolpyruvoyl-6-hydroxy-2-succinyl-cyclohex-3-ene-1-carboxylate + CO2. It participates in quinol/quinone metabolism; 1,4-dihydroxy-2-naphthoate biosynthesis; 1,4-dihydroxy-2-naphthoate from chorismate: step 2/7. It functions in the pathway quinol/quinone metabolism; menaquinone biosynthesis. Catalyzes the thiamine diphosphate-dependent decarboxylation of 2-oxoglutarate and the subsequent addition of the resulting succinic semialdehyde-thiamine pyrophosphate anion to isochorismate to yield 2-succinyl-5-enolpyruvyl-6-hydroxy-3-cyclohexene-1-carboxylate (SEPHCHC). This Staphylococcus aureus (strain bovine RF122 / ET3-1) protein is 2-succinyl-5-enolpyruvyl-6-hydroxy-3-cyclohexene-1-carboxylate synthase.